Reading from the N-terminus, the 502-residue chain is Histidine--tRNA ligase (502 aa).

The protein belongs to the class-II aminoacyl-tRNA synthetase family. In terms of assembly, homodimer.

It localises to the cytoplasm. The catalysed reaction is tRNA(His) + L-histidine + ATP = L-histidyl-tRNA(His) + AMP + diphosphate + H(+). In Brucella suis (strain ATCC 23445 / NCTC 10510), this protein is Histidine--tRNA ligase.